The primary structure comprises 252 residues: Ciliogenesis and planar polarity effector 2 (252 aa).

The tract at residues 46–252 (QMNVDLVRYK…LRETSSEIIV (207 aa)) is small GTPase-like. GTP is bound by residues 62–67 (TGVGKS) and 173–176 (TKFD).

It belongs to the small GTPase superfamily. Rab family.

The protein localises to the cytoplasm. It localises to the cytoskeleton. It is found in the cilium basal body. Its function is as follows. Potential effector of the planar cell polarity signaling pathway. Plays a role in targeted membrane trafficking most probably at the level of vesicle fusion with membranes. Involved in cilium biogenesis by regulating the transport of cargo proteins to the basal body and to the apical tips of cilia. More generally involved in exocytosis in secretory cells. The sequence is that of Ciliogenesis and planar polarity effector 2 (cplane2) from Danio rerio (Zebrafish).